We begin with the raw amino-acid sequence, 2291 residues long: MRGHQFKSWILELREILREIKNSHHFLDSWTQFTSVGSFIHIFFHQERFLKLFDPRIWSILLSRNSQGSTSNRYFTIKGVILFVVAVLIYRINNRNMVERKNLYLIGLLPIPMNSIGPRNDTLEESVGSSNINRLIVSLLYLPKGKKISESCFLNPKESTWVLPITKKCSMPESNWGSRWWRNWIGKKRDSSCKISNETVAGIEILFKEKDLKYLEFLFVYYMDDPIRKDHDWELFDRLSLRKSRNRINLNSGPLFEILVKHWISYLMSAFREKIPIEVEGFFKQQGAGSTIQSNDIEHVSHLFSRNKWAISLQNCAQFHMWQFRQDLFVSWGKNPPESDFLRNVSRENWIWLDNVWLVNKDRFFSKVQNVSSNIQYDSTRSSFVQVTDSSQLKGSSDQSRDHLDSISNEDSEYHTLINQREIQQRKERSILWDPSFLQMERKEIESGRFPKCLSGYSSMSRLFTEREKQMINHLFPEEIEEFLGNPTRSVRSFFSDRWSELHLGSNPTERSTRDQKLLKKQQDLSFVPSRRSENKEMVNIFKIITYLQNTVSIHPISSDPGCDMVPKDEPDMDSSNKISFLNKNPFFDLFHLFHDRNRGGYTLHYDFESEERFQEMADLFTLSITEPDLVYHKGFAFSIDSCGLDQKQFLNEARDESKKKSLLVLPPIFYEENESFSRRIRKKWVRISCGNDLEDPKPKIVVFASNNIMEAVTQYRLIRNLIQIQYSTYGYIRNVLNRFFLMNRSDRNFEYGIQRDQIGKDTLNHRTIMKYTINQYLSNLKKSQKKWFEPLILISRTERSMNRDPDAYRYKWSNGSKNFQEHLEQSVSEQKSRFQVVFDRLRINQYSIDWSEVIDKKDLSKPLRFFLSKPLRFFLSKSLLFLSKLLFFLSNSLPFFCVSFGNIPIHRSEIYIYELKGPNDQLCNQLLESIGLQIVHLKKLKPFLLDDHDTSQKSKFLINGGTISPFLFNKIPKWMIDSFHTRNNRRKSFDNPDSNFSMIFHDQDNWLNPVKPFHRSSLISSFYKANRLRFLNNPHHFCFYWNTRFPFSVEKARINNSYFTYGQFLNILFIRNKIFSLCVGNKKHAFWGRDTISPIESQVSNIFIPNDFPQSGDETYNLYKSFHFPSRSDPFVRRAIYSIADISGTPLTEGQIVNFERTYCQPLSDMNLSDSEGKNLHQYLNFNSNMGLIHTPCSEKDLSSEKRKKRSLCLKKCVEKGQMYRTFQRDSAFSTLSKWNLFQTYMPWFLTSTGYKYLNLIFLDTFSDLLPILSSSQKFVSIFPDIMHGSGISWRILQKKLCLPQWNLISEISEISSKCLHNLLLSEEMIHRNNESPLISTHLRSPNAREFLYSILFLLLVAGYLVRTHLLFVSRASSELQTEFEKVKSLMIPSSMIELRKLLDRYPTSEPNSFWLKNLFLVALEQLGDSLEEIRGSASGGNMLGPAYGVKSIRSKKKDWNINLIEIIDLIPNPINRITFSRNTRHLSHTSKEIYSLIRKRKNVNGDWIDDKIESWVANSDSIADEEREFLVQFSTLTTENRIDQILLSLTHSDHLSKNDSGYQMIEQPGAIYLRYLVDIHKKHLMNYEFNPSCLAERRIFLAHYQTITYSQTSCGENSFHFPSHGKPFSLRLALSPSRGILVIGSIGTGRSYLVKYLATNSYVPFITVFLNKFLDNKPKGFLLDEIDIDDSDDIDDSDNLDASDDIGRDLDTELELLTRMNGLTMDMMPEIDRFYITLQFELAKAMSPCIIWIPNIHDLDVNESNDLSLGLLVNHLSRDCERCSTRNILVIASTHIPQKVDPALIAPNKLNTCIKIRRLLIPQQRKHFFTLSYTRGFHLEKKMFHTNGFGSITMGSNARDLVALTNEVLSISITQKKSIIDTNTIRSALHRQTWDLRSQVRSVQDHGILFYQIGRAVAQNVLLSNCPIDPISIYMKKKSCNEGDSYLYKWYFELGTSMKRLTILLYLLSCSAGSVAQDLWSLSGPDEKNGITSYGLVENDSDLVHGLLEVEGALVGSSRTEKDCSQFDNDRVTLLLRPEPRNPLDMMQKGSCSILDQRFLYEKYESEFEEGEGEGALDPQEDLFNHIVWAPRIWRPWGFLFDCIERPNELGFPYWSRSFRGKRIIYDEEDELQENDSGFLQSGTMQYQTRDRSSKEQGLFRISQFIWDPADPLFFLFKDQPPGSVFSHRELFADEEMSKGLLTSQTDPPTSIYKRWFIKNTQEKHFELLINRQRWLRTNSSLSNGSFRSNTLSESYQYLSNLFLSNGTLLDQMTKTLLRKRWLFPDEMKIGFM.

Residue 1642 to 1649 participates in ATP binding; sequence GSIGTGRS.

The protein belongs to the Ycf2 family.

It is found in the plastid. Its subcellular location is the chloroplast stroma. Probable ATPase of unknown function. Its presence in a non-photosynthetic plant (Epifagus virginiana) and experiments in tobacco indicate that it has an essential function which is probably not related to photosynthesis. This chain is Protein Ycf2 B (ycf2-B), found in Atropa belladonna (Belladonna).